The sequence spans 3133 residues: MDSASTSMSRVHPSGVYRRPLLPSGGPRSTSERDERVDLSGCPRHVERGTCLSLPPSFSAAAVDACLDSRCQVLSTAASGGCMQSATEHLRVSTRPCVASTHANSGTFAAVRSRVQRGQALSLFLLFSSSPLLLLLLLHQFFISSLHTEAVLGSPLLPALAVEVSSPEALKTTFEEREADSHRGSRDGEKVSGSRDIRFEEQEIRSRDGKETIFPSPHGDQPSGAGAWTSEGRRKKRSFYRDHIERGTSHPAFSFFSDPTSRFVLDPHLPASHASTCERGASCSPVDAIQPVFVSPSHSGNESEKAERARLEQSTPAKLWRPPKVFAESFASERRQTDTGLVSLHGDVAFRSPGFTVSIKRQAQKEWEREQLREKLLAEGGDLSMLEVQDDNDSGEIYLYSSMQLALDRQCVSQAEAMKTDWSYVRLHASNFYCFSKDDLNFETTGQNCVDSCSQTVACAGVPTTRAIRNITDTAKLPDNILGRNWPLKHCVTSRLQDALNEICGSPESIYRVVNDVAGCVPVESIDWTEASPVCVDDCNKVVNCYGQVTNADQMVPFTSDQRAMLETRKKSTCLCDETLEQGKLYRGCQTRTRTGRECQRWDVDSPHEHFELREAHNYCRNVNAEAEIWCYTTDPHVRFDFCDPLGVSERFVQPGETVDIVISGVDLSPHYSLRIYKGSETNVCGANNGQRAPAAFKDWGVERHFLPKYSVTDGTISLLTWPDLGIEPTATGKIALCACNFFGFLASNWNGATPCSQDSHFNVQLGVLHVIGPVHASGGEVQMISGVPHEFTVRGAGLRTVDTLVAVGDRTGVMCTSPNFFQMQLELLRGVGDGAFAVFTKGIATGENQYVKTGFKSVTSDGLLATTGDLTLLATGHYCLCWQGTNNGQRAYGLVDKLVVTGVDLSLTYRSVYSPSAGSASQKLFSTFIHTYRLSKDFADDALTVRTATKTPCEGTVVAQSRKIEKEYRSTTQMATEKLLYKAKYMSVKNLPESSTTYSEMLHVCLKSPNGEVLQFLGESSISEYYSYPFHDFVLPETLHVRTPSSVYSYTVSEFSNLGLHWGTVERDGEVVIGNFLDFFTANPFSKVLHFWLSHSGNVITAWAFSASDPSPTLMATFKSEFPVGMALHTTANFVHLYLLKGQTPATLFVMDVTVPSTGLSPEALIHALDPGQAGLVEPSNIVLIYEGEEDESDPVVVLVDSGTGYIHLFDHDLQEVGKSNGQEALAQPLVKPTDLHCLRKTEGSGTVSSVWDCFATDVGLPRVIYFSIDASTKEFRFLTTYSGEGTKDGVNTNLRGPISVVAHYFSGKTLIYVAEAASAYPLLLTKVDEEETLHYYAYLSQNSVGSSSTVGRLSLLHFSDDNSSLEHVSLATFRDAWRGAEVQIVSLDTTATVPNFRYHPHEWYTVGDTHSLEPSVIGLGTLKGVRKFALSTEIPNAAYVHSIASVDPNTGVVKLELTHIQRASVEIQVIAQGMVSQMTTTFKFNVACKDGYYYSQGMCVRCAAGTYNSVNLIKADPASSWAKCRKCGENHTTVAEGSISEDQCQCQLGFHIPDESEEGAKCEPCPAGMWKDTVANTGCIGSCPAHSSTTVVGAKSAEERRCECDAGYYFVGESVLNQECVLAEKGYFSEGGFEAERVPCPQHSTTNPNDDPSFVSRNLEACVCEKGYTPASLQSLEDSSSPEWKLMEWLKIHPKHTQLAKSQVCVPCGRGFYKDSIGAHACTPCPLNSFAATSVATSAAECELCQPGYYQTGNSDVPCGECPEGHFCVGSEPTVSSLSQYAGAKIMCPDNTATVPPNAQNDHPYKCMCQEGFEFSKVDSVTPTVICQPARVGDYKGVVSNTPGQRCPSGSSTQSTGSVSLEDCICTPGYFFSEASGECTECPVGFYCPGGRDSLTASHTMPVQCPAETNTRGTMSATSAECVCDKGYYRFSSQVNSGDIVCRPCPANSFKDWVGNDVCKACSENSGTEQTGANSASQCLCSRGFYYDISQAECVACSNPLKYCPGGEVECEEEEDNCVNGKKPAEPQACPPHTRITAGYDTPWSLDDCKCDPGFAYESGSAADGEKRCEPCSAGSYKSSVQDGPCNGLCGTSSTSFPGAQTQSQCFCEEGTYFAADACHTCPIGAFCGGGLLEEAEAKLREDSSFTGITSADHVKPFAEAGYFLNKLKEELESPNDWQFTECPIQNACLSHGVCSETMTEYLCSECRRGYTNTFSKGEICTSCPSMVWNIVCLMGYYLATLLFNIVMTYMNVAAGFNRRSIHSIVIKIASNYLTGISVLSVIDFSTIAFPSWITDLTATVTETVSAKHSTRLMSVDCLLRDNFDLSFSESFFYTMVFYALIPIALPIVATIIMSIIVYRVRAWYHNSTQRKLELLKQTMQYGLYSLAQQLKEKYEEDRVFMIFRYIALPGESIFRRAAKFMEDMIPIYVTVLFFVYSSTTRNMLSLLDCTYIDFGRAHQAKYFLRAAMSVECTDILSGPYFKFFAVGITGLLVWSIGIPLSCFLVLYVNRKTLNSRETRLKYGFLHNGFVKKYWYWEMVVFARKFLVIVVSSVALIPSADKNGSRVWLAVVIAVIFLIIHLVTQPFDKRSYLTLDKLENHSMTIWTITLIVLAMMIGSDFSGSVNMALLLFVAVLSCMFILEVGVSLMFAYFDNVRTQQTFFRVPVIGYVFRFFARLSEKRRAREPIVVFDTENEVIQLVAAKRQTWTLFRALRKNINLAERNYFIKVMSESLGFAVVHMKLDVIPGSFLEFALRLGLAFHRVEEVSQQNKKSLQAIADGDLSQLADWSNNEHKRKDLSESAKTSQKKLATELDTFYTDMEEKFAAKDETPTAEEKTEEQDERLHDLEGELVSDTELEQMKKTMTEAEEAEEDEDRGDDAAYLRNLQDFTNDITGEDEETMYLFDQDMMTRGIALSELYLALLKLQMQDSNTINSQFDAFRLRKQIQADEFSEALQKRNRKLKVMREALESLVLSSGTSLAELGMTEEAFQSKQAELQKLNAEIEKLKTRLQELKDNPDSYREGGDVEREEDWVDEDRAAEIEKIQEENARRKLEKEEREEADREICMTGEDMENAGWFGEDDTATIDDSSDAPLPEGTFRLIGQDAETWDEFGYSSSKGNYEAAPDDGL.

Residues 1 to 39 (MDSASTSMSRVHPSGVYRRPLLPSGGPRSTSERDERVDL) form a disordered region. Basic and acidic residues predominate over residues 30-39 (TSERDERVDL). A helical membrane pass occupies residues 123–143 (LFLLFSSSPLLLLLLLHQFFI). Composition is skewed to basic and acidic residues over residues 173–211 (TFEE…DGKE) and 301–311 (NESEKAERARL). 2 disordered regions span residues 173–234 (TFEE…EGRR) and 294–317 (VSPS…STPA). Asn301, Asn392, and Asn470 each carry an N-linked (GlcNAc...) asparagine glycan. Positions 577-644 (DETLEQGKLY…DPHVRFDFCD (68 aa)) constitute a Kringle domain. 2 disulfides stabilise this stretch: Cys599–Cys631 and Cys620–Cys643. 2 N-linked (GlcNAc...) asparagine glycosylation sites follow: Asn1364 and Asn1532. Transmembrane regions (helical) follow at residues 2229 to 2249 (MVWN…FNIV), 2276 to 2296 (LTGI…PSWI), and 2339 to 2359 (VFYA…MSII). N-linked (GlcNAc...) asparagine glycosylation occurs at Asn2369. 3 consecutive transmembrane segments (helical) span residues 2420–2440 (AAKF…FVYS), 2489–2509 (VGIT…FLVL), and 2539–2559 (WEMV…VALI). N-linked (GlcNAc...) asparagine glycosylation occurs at Asn2565. The helical transmembrane segment at 2569-2589 (VWLAVVIAVIFLIIHLVTQPF) threads the bilayer. The N-linked (GlcNAc...) asparagine glycan is linked to Asn2602. A run of 2 helical transmembrane segments spans residues 2607 to 2627 (IWTI…SGSV) and 2632 to 2652 (LLFV…SLMF). 2 stretches are compositionally biased toward basic and acidic residues: residues 2827 to 2838 (FAAKDETPTAEE) and 3049 to 3069 (QEEN…DREI). Disordered regions lie at residues 2827–2847 (FAAK…DERL) and 3049–3101 (QEEN…LPEG). The stretch at 2955–3068 (SEALQKRNRK…KEEREEADRE (114 aa)) forms a coiled coil. Positions 3083 to 3094 (GEDDTATIDDSS) are enriched in acidic residues.

As to quaternary structure, component of a complex, at least composed of cysteine repeat modular protein A (CRMPa), cysteine repeat modular protein B (CRMPb), micronemal protein 15 (MIC15) and thrombospondin type 1 domain-containing protein (TSP1).

It localises to the cell membrane. The protein resides in the endoplasmic reticulum. It is found in the golgi apparatus. Functionally, required for triggering rhoptry secretion. Plays a role in host cell invasion. This Toxoplasma gondii protein is Cysteine repeat modular protein A.